We begin with the raw amino-acid sequence, 374 residues long: Queuine tRNA-ribosyltransferase (374 aa).

Asp89 functions as the Proton acceptor in the catalytic mechanism. Residues Asp89–Phe93, Asp143, Gln187, and Gly214 contribute to the substrate site. Residues Gly245–Asp251 form an RNA binding region. The active-site Nucleophile is Asp264. The RNA binding; important for wobble base 34 recognition stretch occupies residues Thr269 to Arg273. Zn(2+) is bound by residues Cys302, Cys304, Cys307, and His333.

Belongs to the queuine tRNA-ribosyltransferase family. Homodimer. Within each dimer, one monomer is responsible for RNA recognition and catalysis, while the other monomer binds to the replacement base PreQ1. It depends on Zn(2+) as a cofactor.

The catalysed reaction is 7-aminomethyl-7-carbaguanine + guanosine(34) in tRNA = 7-aminomethyl-7-carbaguanosine(34) in tRNA + guanine. The protein operates within tRNA modification; tRNA-queuosine biosynthesis. Catalyzes the base-exchange of a guanine (G) residue with the queuine precursor 7-aminomethyl-7-deazaguanine (PreQ1) at position 34 (anticodon wobble position) in tRNAs with GU(N) anticodons (tRNA-Asp, -Asn, -His and -Tyr). Catalysis occurs through a double-displacement mechanism. The nucleophile active site attacks the C1' of nucleotide 34 to detach the guanine base from the RNA, forming a covalent enzyme-RNA intermediate. The proton acceptor active site deprotonates the incoming PreQ1, allowing a nucleophilic attack on the C1' of the ribose to form the product. After dissociation, two additional enzymatic reactions on the tRNA convert PreQ1 to queuine (Q), resulting in the hypermodified nucleoside queuosine (7-(((4,5-cis-dihydroxy-2-cyclopenten-1-yl)amino)methyl)-7-deazaguanosine). This is Queuine tRNA-ribosyltransferase from Shewanella sp. (strain MR-4).